The chain runs to 181 residues: Large ribosomal subunit protein uL5 (181 aa).

It belongs to the universal ribosomal protein uL5 family. As to quaternary structure, part of the 50S ribosomal subunit; part of the 5S rRNA/L5/L18/L25 subcomplex. Contacts the 5S rRNA and the P site tRNA. Forms a bridge to the 30S subunit in the 70S ribosome.

Functionally, this is one of the proteins that bind and probably mediate the attachment of the 5S RNA into the large ribosomal subunit, where it forms part of the central protuberance. In the 70S ribosome it contacts protein S13 of the 30S subunit (bridge B1b), connecting the 2 subunits; this bridge is implicated in subunit movement. Contacts the P site tRNA; the 5S rRNA and some of its associated proteins might help stabilize positioning of ribosome-bound tRNAs. The polypeptide is Large ribosomal subunit protein uL5 (Mesomycoplasma hyopneumoniae (strain 7448) (Mycoplasma hyopneumoniae)).